Consider the following 166-residue polypeptide: NAD(P)H-quinone oxidoreductase subunit I, chloroplastic (166 aa).

2 4Fe-4S ferredoxin-type domains span residues 55–84 and 95–124; these read GRIH…VDWK and LNYS…MTEE. The [4Fe-4S] cluster site is built by Cys-64, Cys-67, Cys-70, Cys-74, Cys-104, Cys-107, Cys-110, and Cys-114.

Belongs to the complex I 23 kDa subunit family. NDH is composed of at least 16 different subunits, 5 of which are encoded in the nucleus. [4Fe-4S] cluster serves as cofactor.

The protein resides in the plastid. The protein localises to the chloroplast thylakoid membrane. It carries out the reaction a plastoquinone + NADH + (n+1) H(+)(in) = a plastoquinol + NAD(+) + n H(+)(out). The catalysed reaction is a plastoquinone + NADPH + (n+1) H(+)(in) = a plastoquinol + NADP(+) + n H(+)(out). Functionally, NDH shuttles electrons from NAD(P)H:plastoquinone, via FMN and iron-sulfur (Fe-S) centers, to quinones in the photosynthetic chain and possibly in a chloroplast respiratory chain. The immediate electron acceptor for the enzyme in this species is believed to be plastoquinone. Couples the redox reaction to proton translocation, and thus conserves the redox energy in a proton gradient. In Espeletia timotensis (Andean giant rosette), this protein is NAD(P)H-quinone oxidoreductase subunit I, chloroplastic.